Reading from the N-terminus, the 686-residue chain is MQLGEQLLVSSVNLPGAHFYPLESARGGSGGSAGHLPSAAPSPQKLDLDKASKKFSGSLSCEAVSGEPAAASAGAPAAMLSDTDAGDAFASAAAVAKPGPPDGRKGSPCGEEELPSAAAAAAAAAAAAAATARYSMDSLSSERYYLQSPGPQGSELAAPCSLFPYQAAAGAPHGPVYPAPNGARYPYGSMLPPGGFPAAVCPPGRAQFGPGAGAGSGAGGSSGGGGGPGTYQYSQGAPLYGPYPGAAAAGSCGGLGGLGVPGSGFRAHVYLCNRPLWLKFHRHQTEMIITKQGRRMFPFLSFNINGLNPTAHYNVFVEVVLADPNHWRFQGGKWVTCGKADNNMQGNKMYVHPESPNTGSHWMRQEISFGKLKLTNNKGANNNNTQMIVLQSLHKYQPRLHIVEVTEDGVEDLNEPSKTQTFTFSETQFIAVTAYQNTDITQLKIDHNPFAKGFRDNYDSSHQIVPGGRYGVQSFFPEPFVNTLPQARYYNGERTVPQTNGLLSPQQSEEVANPPQRWLVTPVQQPGTNKLDISSYESEYTSSTLLPYGIKSLPLQTSHALGYYPDPTFPAMAGWGGRGSYQRKMAAGLPWTSRTSPTVFSEDQLSKEKVKEEIGSSWIETPPSIKSLDSNDSGVYTSACKRRRLSPSNSSNENSPSIKCEDINAEEYSKDTSKGMGGYYAFYTTP.

The segment at 27–46 (GGSGGSAGHLPSAAPSPQKL) is disordered. Positions 34–43 (GHLPSAAPSP) are enriched in low complexity. Ser-107 is modified (phosphoserine). Positions 276–456 (LWLKFHRHQT…HNPFAKGFRD (181 aa)) form a DNA-binding region, T-box. The tract at residues 571-686 (AMAGWGGRGS…GGYYAFYTTP (116 aa)) is required for transcription activation. The segment at 639 to 686 (ACKRRRLSPSNSSNENSPSIKCEDINAEEYSKDTSKGMGGYYAFYTTP) is disordered. Residues 646 to 657 (SPSNSSNENSPS) show a composition bias toward low complexity. The span at 659 to 673 (KCEDINAEEYSKDTS) shows a compositional bias: basic and acidic residues.

In terms of tissue distribution, expressed in CD8+ T-cells.

The protein resides in the nucleus. Functionally, functions as a transcriptional activator playing a crucial role during development. Functions in trophoblast differentiation and later in gastrulation, regulating both mesoderm delamination and endoderm specification. Plays a role in brain development being required for the specification and the proliferation of the intermediate progenitor cells and their progeny in the cerebral cortex. Required for differentiation and migration of unipolar dendritic brush cells. Also involved in the differentiation of CD8+ T-cells during immune response regulating the expression of lytic effector genes. The chain is Eomesodermin homolog (EOMES) from Homo sapiens (Human).